Reading from the N-terminus, the 256-residue chain is Leucyl/phenylalanyl-tRNA--protein transferase (256 aa).

The protein belongs to the L/F-transferase family.

Its subcellular location is the cytoplasm. It carries out the reaction N-terminal L-lysyl-[protein] + L-leucyl-tRNA(Leu) = N-terminal L-leucyl-L-lysyl-[protein] + tRNA(Leu) + H(+). It catalyses the reaction N-terminal L-arginyl-[protein] + L-leucyl-tRNA(Leu) = N-terminal L-leucyl-L-arginyl-[protein] + tRNA(Leu) + H(+). The catalysed reaction is L-phenylalanyl-tRNA(Phe) + an N-terminal L-alpha-aminoacyl-[protein] = an N-terminal L-phenylalanyl-L-alpha-aminoacyl-[protein] + tRNA(Phe). Functions in the N-end rule pathway of protein degradation where it conjugates Leu, Phe and, less efficiently, Met from aminoacyl-tRNAs to the N-termini of proteins containing an N-terminal arginine or lysine. This is Leucyl/phenylalanyl-tRNA--protein transferase from Hydrogenovibrio crunogenus (strain DSM 25203 / XCL-2) (Thiomicrospira crunogena).